The primary structure comprises 286 residues: Acyl-CoA-binding domain-containing protein 6 (286 aa).

Residues 1 to 24 form a disordered region; sequence MASPGVLEESSSGEACSGGCPEQW. The span at 8-22 shows a compositional bias: low complexity; that stretch reads EESSSGEACSGGCPE. In terms of domain architecture, ACB spans 32–117; it reads LQGQFEQAAK…VKKLDPDWSP (86 aa). Residues 59 to 63, Lys85, and Tyr104 each bind an acyl-CoA; that span reads YARYK. 2 ANK repeats span residues 182 to 211 and 215 to 244; these read EGRCLLHWACDRGHTQLVSVLLFHNAHINM and EGQTPLHYASACEFPDIVDLLLDHGADPSL.

The protein localises to the cytoplasm. It is found in the nucleus. Binds long-chain acyl-coenzyme A molecules with a strong preference for unsaturated C18:1-CoA. Does not bind fatty acids. Plays a role in protein N-myristoylation. The protein is Acyl-CoA-binding domain-containing protein 6 (acbd6) of Xenopus tropicalis (Western clawed frog).